Here is a 354-residue protein sequence, read N- to C-terminus: Probable disease resistance protein At5g45490 (354 aa).

A coiled-coil region spans residues 33–53; that stretch reads AKGNLEKKRDDNEEEERLKTE. Positions 45–122 constitute an NB-ARC domain; it reads EEEERLKTES…VYAPRVWVSM (78 aa). Residue 91-98 participates in ATP binding; it reads GEYGVGKT. Residues 328 to 354 form a disordered region; the sequence is DDEVGPVGSTHGQTDSSNRQPANQASS. Polar residues predominate over residues 337–354; it reads THGQTDSSNRQPANQASS.

Possible disease resistance protein. This Arabidopsis thaliana (Mouse-ear cress) protein is Probable disease resistance protein At5g45490.